The primary structure comprises 34 residues: Photosystem II reaction center protein Psb30 (34 aa).

The helical transmembrane segment at 6-26 (VIGQLVSTGAIMLLGPAIIIL) threads the bilayer.

It belongs to the Psb30/Ycf12 family. As to quaternary structure, PSII is composed of 1 copy each of membrane proteins PsbA, PsbB, PsbC, PsbD, PsbE, PsbF, PsbH, PsbI, PsbJ, PsbK, PsbL, PsbM, PsbT, PsbX, PsbY, PsbZ, Psb30/Ycf12, peripheral proteins of the oxygen-evolving complex and a large number of cofactors. It forms dimeric complexes.

It is found in the plastid. Its subcellular location is the chloroplast thylakoid membrane. Its function is as follows. A core subunit of photosystem II (PSII), probably helps stabilize the reaction center. The protein is Photosystem II reaction center protein Psb30 of Thalassiosira pseudonana (Marine diatom).